Here is a 316-residue protein sequence, read N- to C-terminus: Ribosomal protein L11 methyltransferase (316 aa).

S-adenosyl-L-methionine-binding residues include Thr-157, Gly-178, Asp-200, and Asn-243.

The protein belongs to the methyltransferase superfamily. PrmA family.

Its subcellular location is the cytoplasm. The catalysed reaction is L-lysyl-[protein] + 3 S-adenosyl-L-methionine = N(6),N(6),N(6)-trimethyl-L-lysyl-[protein] + 3 S-adenosyl-L-homocysteine + 3 H(+). Functionally, methylates ribosomal protein L11. This chain is Ribosomal protein L11 methyltransferase, found in Streptococcus pneumoniae (strain Hungary19A-6).